Here is a 447-residue protein sequence, read N- to C-terminus: N-succinylarginine dihydrolase (447 aa).

Substrate-binding positions include Ala19 to Ser28, Asn110, and His137 to Arg138. Glu174 is an active-site residue. Arg212 contacts substrate. His248 is a catalytic residue. 2 residues coordinate substrate: Asp250 and Asn359. Cys365 acts as the Nucleophile in catalysis.

The protein belongs to the succinylarginine dihydrolase family. As to quaternary structure, homodimer.

The enzyme catalyses N(2)-succinyl-L-arginine + 2 H2O + 2 H(+) = N(2)-succinyl-L-ornithine + 2 NH4(+) + CO2. It functions in the pathway amino-acid degradation; L-arginine degradation via AST pathway; L-glutamate and succinate from L-arginine: step 2/5. Functionally, catalyzes the hydrolysis of N(2)-succinylarginine into N(2)-succinylornithine, ammonia and CO(2). This is N-succinylarginine dihydrolase from Salmonella dublin (strain CT_02021853).